Here is a 265-residue protein sequence, read N- to C-terminus: Glutamate racemase (265 aa).

Substrate contacts are provided by residues 9-10 and 41-42; these read DS and YG. Cys73 functions as the Proton donor/acceptor in the catalytic mechanism. 74–75 serves as a coordination point for substrate; that stretch reads NT. Cys180 acts as the Proton donor/acceptor in catalysis. 181–182 is a substrate binding site; the sequence is TH.

It belongs to the aspartate/glutamate racemases family.

The catalysed reaction is L-glutamate = D-glutamate. The protein operates within cell wall biogenesis; peptidoglycan biosynthesis. Functionally, provides the (R)-glutamate required for cell wall biosynthesis. In Aliivibrio salmonicida (strain LFI1238) (Vibrio salmonicida (strain LFI1238)), this protein is Glutamate racemase.